Here is a 366-residue protein sequence, read N- to C-terminus: tRNA/tmRNA (uracil-C(5))-methyltransferase (366 aa).

Residues Q190, Y218, N223, E239, and D299 each coordinate S-adenosyl-L-methionine. The Nucleophile role is filled by C324. Catalysis depends on E358, which acts as the Proton acceptor.

This sequence belongs to the class I-like SAM-binding methyltransferase superfamily. RNA M5U methyltransferase family. TrmA subfamily.

It catalyses the reaction uridine(54) in tRNA + S-adenosyl-L-methionine = 5-methyluridine(54) in tRNA + S-adenosyl-L-homocysteine + H(+). It carries out the reaction uridine(341) in tmRNA + S-adenosyl-L-methionine = 5-methyluridine(341) in tmRNA + S-adenosyl-L-homocysteine + H(+). Functionally, dual-specificity methyltransferase that catalyzes the formation of 5-methyluridine at position 54 (m5U54) in all tRNAs, and that of position 341 (m5U341) in tmRNA (transfer-mRNA). This is tRNA/tmRNA (uracil-C(5))-methyltransferase from Escherichia coli O81 (strain ED1a).